A 119-amino-acid polypeptide reads, in one-letter code: Large ribosomal subunit protein bL19 (119 aa).

This sequence belongs to the bacterial ribosomal protein bL19 family.

In terms of biological role, this protein is located at the 30S-50S ribosomal subunit interface and may play a role in the structure and function of the aminoacyl-tRNA binding site. This Borreliella afzelii (strain PKo) (Borrelia afzelii) protein is Large ribosomal subunit protein bL19.